The primary structure comprises 2381 residues: Protein Ycf2 (2381 aa).

1655–1662 (GPMETGRS) contacts ATP.

The protein belongs to the Ycf2 family.

The protein localises to the plastid. It is found in the chloroplast stroma. Its function is as follows. Probable ATPase of unknown function. Its presence in a non-photosynthetic plant (Epifagus virginiana) and experiments in tobacco indicate that it has an essential function which is probably not related to photosynthesis. This is Protein Ycf2 from Angiopteris evecta (Mule's foot fern).